The primary structure comprises 397 residues: Protein RecA (397 aa).

The disordered stretch occupies residues 1 to 23 (MALETKPAKDPAAEDKHELDPKR). ATP is bound at residue 83–90 (GPESSGKT).

The protein belongs to the RecA family.

It is found in the cytoplasm. Can catalyze the hydrolysis of ATP in the presence of single-stranded DNA, the ATP-dependent uptake of single-stranded DNA by duplex DNA, and the ATP-dependent hybridization of homologous single-stranded DNAs. It interacts with LexA causing its activation and leading to its autocatalytic cleavage. In Bifidobacterium longum (strain NCC 2705), this protein is Protein RecA.